Consider the following 206-residue polypeptide: MIGKLKGTVDSFGEDHLILDVHGVGYLVHCSGRTLQALPRVGEAAVLFIETHVREDQIRLFGFVTEAEREWFRLLQGIQGIGTKTALAILSTLKPSDLAQAVALGDKTALARANGVGPRVATRIVTELKDKVPAFTAADPGLARLAADVEATEAAGGALADAVSALVNLGYGQAQAHTAIAAAGRKAGEDATTETLIRLGLKELAK.

The domain I stretch occupies residues 1-64 (MIGKLKGTVD…EDQIRLFGFV (64 aa)). The tract at residues 65-143 (TEAEREWFRL…AFTAADPGLA (79 aa)) is domain II. A flexible linker region spans residues 144 to 154 (RLAADVEATEA). The segment at 154-206 (AAGGALADAVSALVNLGYGQAQAHTAIAAAGRKAGEDATTETLIRLGLKELAK) is domain III.

It belongs to the RuvA family. In terms of assembly, homotetramer. Forms an RuvA(8)-RuvB(12)-Holliday junction (HJ) complex. HJ DNA is sandwiched between 2 RuvA tetramers; dsDNA enters through RuvA and exits via RuvB. An RuvB hexamer assembles on each DNA strand where it exits the tetramer. Each RuvB hexamer is contacted by two RuvA subunits (via domain III) on 2 adjacent RuvB subunits; this complex drives branch migration. In the full resolvosome a probable DNA-RuvA(4)-RuvB(12)-RuvC(2) complex forms which resolves the HJ.

It localises to the cytoplasm. Its function is as follows. The RuvA-RuvB-RuvC complex processes Holliday junction (HJ) DNA during genetic recombination and DNA repair, while the RuvA-RuvB complex plays an important role in the rescue of blocked DNA replication forks via replication fork reversal (RFR). RuvA specifically binds to HJ cruciform DNA, conferring on it an open structure. The RuvB hexamer acts as an ATP-dependent pump, pulling dsDNA into and through the RuvAB complex. HJ branch migration allows RuvC to scan DNA until it finds its consensus sequence, where it cleaves and resolves the cruciform DNA. The sequence is that of Holliday junction branch migration complex subunit RuvA from Azorhizobium caulinodans (strain ATCC 43989 / DSM 5975 / JCM 20966 / LMG 6465 / NBRC 14845 / NCIMB 13405 / ORS 571).